Consider the following 367-residue polypeptide: 4-hydroxy-3-methylbut-2-en-1-yl diphosphate synthase (flavodoxin) (367 aa).

Positions 268, 271, 303, and 310 each coordinate [4Fe-4S] cluster.

This sequence belongs to the IspG family. [4Fe-4S] cluster serves as cofactor.

It catalyses the reaction (2E)-4-hydroxy-3-methylbut-2-enyl diphosphate + oxidized [flavodoxin] + H2O + 2 H(+) = 2-C-methyl-D-erythritol 2,4-cyclic diphosphate + reduced [flavodoxin]. The protein operates within isoprenoid biosynthesis; isopentenyl diphosphate biosynthesis via DXP pathway; isopentenyl diphosphate from 1-deoxy-D-xylulose 5-phosphate: step 5/6. Its function is as follows. Converts 2C-methyl-D-erythritol 2,4-cyclodiphosphate (ME-2,4cPP) into 1-hydroxy-2-methyl-2-(E)-butenyl 4-diphosphate. The protein is 4-hydroxy-3-methylbut-2-en-1-yl diphosphate synthase (flavodoxin) of Halalkalibacterium halodurans (strain ATCC BAA-125 / DSM 18197 / FERM 7344 / JCM 9153 / C-125) (Bacillus halodurans).